The chain runs to 1014 residues: Resistance to glucose repression protein 1 (1014 aa).

The tract at residues 1–63 (MSTNLANYFA…AVQAKNDDDF (63 aa)) is disordered. S2 is modified (N-acetylserine). Over residues 11–34 (GKKDIENEHVNRNASHESNSKSDV) the composition is skewed to basic and acidic residues. Position 73 is a phosphothreonine (T73). S75 bears the Phosphoserine mark. 2 disordered regions span residues 90–144 (LGRS…YLIP) and 236–270 (SEGN…KNSK). The span at 104-115 (YDNSSNNSSSNS) shows a compositional bias: low complexity. Phosphoserine is present on residues S242 and S254. The span at 247-260 (DLERGYGSDDENSK) shows a compositional bias: basic and acidic residues. A Nuclear localization signal motif is present at residues 277-283 (KPILKKR). Phosphoserine is present on S311. Positions 340 to 463 (YPKESNSSVS…SEKSNKPTKN (124 aa)) are disordered. 4 stretches are compositionally biased toward polar residues: residues 343–352 (ESNSSVSLKS), 361–370 (STIPNPVGEN), 389–407 (HVQN…LENS), and 415–455 (LDQN…NPSE). S421 is subject to Phosphoserine. Residue Y480 is modified to Phosphotyrosine. S490 is subject to Phosphoserine. Disordered regions lie at residues 531–557 (EHLN…DEEH) and 570–591 (SDSG…TTSR). A phosphoserine mark is found at S570, S572, and S576. The segment covering 578 to 591 (ITDNSSVASSTTSR) has biased composition (polar residues). Residues 595-599 (RPIIK) carry the Nuclear localization signal motif. 3 positions are modified to phosphoserine: S610, S614, and S680. The disordered stretch occupies residues 690–897 (SKEKHVPQLH…QSFRIVNNTP (208 aa)). The span at 722–740 (YSSSSDSEQQFIEDSQYNS) shows a compositional bias: low complexity. Residues 741-758 (SDDEEEEDDDDQEVDDNH) are compositionally biased toward acidic residues. 2 stretches are compositionally biased toward polar residues: residues 770–802 (LGKS…NFTG) and 822–833 (RNSSSGNFIFNS). The short motif at 873 to 879 (KKKALPK) is the Nuclear localization signal element. The segment covering 884–897 (SDSSQSFRIVNNTP) has biased composition (polar residues). T896 bears the Phosphothreonine mark. S898 carries the post-translational modification Phosphoserine. Positions 959–972 (KKVDSVQTTRKEAS) are enriched in basic and acidic residues. Residues 959–982 (KKVDSVQTTRKEASLTDSSNESLH) are disordered. S980 carries the phosphoserine modification.

Interacts with SAK1.

The protein resides in the nucleus. Functionally, involved in RNA processing and negative regulation of glucose repression. Regulates the level of two antigens, P43 and P70. Binds to protein phosphatase type 1. Functions with REG2 and SNF1 protein kinase to regulate growth. Might regulate SNF1 directly or indirectly. The sequence is that of Resistance to glucose repression protein 1 (REG1) from Saccharomyces cerevisiae (strain ATCC 204508 / S288c) (Baker's yeast).